The chain runs to 232 residues: MKELQTVLKNHFAIEFADKNLLETAFTHTSYANEHRLLKISHNERLEFLGDAVLQLLISEYLYKKYPKKPEGDLSKLRAMIVREESLAGFARDCQFNQFIKLGKGEEKSGGRNRDTILGDAFEAFLGALLLDKDVAKVKEFIYQVIIPKVEAGEFEMITDYKTHLQELLQVNGDVAIRYQVISETGPAHDKVFDVEVLVEGKSIGQGQGRSKKLAEQEAAKNAVEKGLDSCI.

Residues glutamine 5 to aspartate 134 form the RNase III domain. Glutamate 47 lines the Mg(2+) pocket. Aspartate 51 is an active-site residue. The Mg(2+) site is built by aspartate 120 and glutamate 123. Glutamate 123 is an active-site residue. The DRBM domain maps to aspartate 160–aspartate 229.

The protein belongs to the ribonuclease III family. As to quaternary structure, homodimer. The cofactor is Mg(2+).

It localises to the cytoplasm. It carries out the reaction Endonucleolytic cleavage to 5'-phosphomonoester.. Its function is as follows. Digests double-stranded RNA. Involved in the processing of primary rRNA transcript to yield the immediate precursors to the large and small rRNAs (23S and 16S). Processes some mRNAs, and tRNAs when they are encoded in the rRNA operon. Processes pre-crRNA and tracrRNA of type II CRISPR loci if present in the organism. This Streptococcus pneumoniae (strain P1031) protein is Ribonuclease 3.